Reading from the N-terminus, the 291-residue chain is Methionine aminopeptidase (291 aa).

Residue His118 coordinates substrate. Positions 135, 146, and 209 each coordinate a divalent metal cation. Substrate is bound at residue His216. A divalent metal cation-binding residues include Glu241 and Glu273.

Belongs to the peptidase M24A family. Methionine aminopeptidase type 1 subfamily. Monomer. The cofactor is Co(2+). Zn(2+) is required as a cofactor. It depends on Mn(2+) as a cofactor. Requires Fe(2+) as cofactor.

The catalysed reaction is Release of N-terminal amino acids, preferentially methionine, from peptides and arylamides.. Its function is as follows. Removes the N-terminal methionine from nascent proteins. The N-terminal methionine is often cleaved when the second residue in the primary sequence is small and uncharged (Met-Ala-, Cys, Gly, Pro, Ser, Thr, or Val). Requires deformylation of the N(alpha)-formylated initiator methionine before it can be hydrolyzed. The chain is Methionine aminopeptidase from Chlamydia muridarum (strain MoPn / Nigg).